A 267-amino-acid polypeptide reads, in one-letter code: Dichloromethane dehalogenase (267 aa).

The GST N-terminal domain maps to 3–85; that stretch reads TKLRYLHHPA…YLSEKYDCSS (83 aa). The GST C-terminal domain occupies 91 to 224; sequence TLEERGHIQQ…AWQYENVRKY (134 aa).

This sequence belongs to the GST superfamily. Homohexamer.

Its subcellular location is the cytoplasm. It catalyses the reaction dichloromethane + H2O = formaldehyde + 2 chloride + 2 H(+). Its pathway is xenobiotic degradation; dichloromethane degradation. This is Dichloromethane dehalogenase (dcmA) from Methylophilus leisingeri (strain DSM 6813 / VKM B-2013 / DM11).